Reading from the N-terminus, the 251-residue chain is uncharacterized protein (251 aa).

Valine 14–valine 37 provides a ligand contact to NADP(+). Residue serine 145 coordinates substrate. Catalysis depends on tyrosine 158, which acts as the Proton acceptor.

This sequence belongs to the short-chain dehydrogenases/reductases (SDR) family.

In terms of biological role, may be involved in the biosynthesis of a heptaene-type antibiotic. This is an uncharacterized protein from Streptomyces coelicolor.